Consider the following 520-residue polypeptide: MNPDLDTGHNTSAPAHWGELKNANFTGPNQTSSNSTLPQLDITRAISVGLVLGAFILFAIVGNILVILSVACNRHLRTPTNYFIVNLAMADLLLSFTVLPFSAALEVLGYWVLGRIFCDIWAAVDVLCCTASILSLCAISIDRYIGVRYSLQYPTLVTRRKAILALLSVWVLSTVISIGPLLGWKEPAPNDDKECGVTEEPFYALFSSLGSFYIPLAVILVMYCRVYIVAKRTTKNLEAGVMKEMSNSKELTLRIHSKNFHEDTLSSTKAKGHNPRSSIAVKLFKFSREKKAAKTLGIVVGMFILCWLPFFIALPLGSLFSTLKPPDAVFKVVFWLGYFNSCLNPIIYPCSSKEFKRAFVRILGCQCRGRGRRRRRRRRRLGGCAYTYRPWTRGGSLERSQSRKDSLDDSGSCLSGSQRTLPSASPSPGYLGRGAPPPVELCAFPEWKAPGALLSLPAPEPPGRRGRHDSGPLFTFKLLTEPESPGTDGGASNGGCEAAADVANGQPGFKSNMPLAPGQF.

Over 1–45 (MNPDLDTGHNTSAPAHWGELKNANFTGPNQTSSNSTLPQLDITRA) the chain is Extracellular. 4 N-linked (GlcNAc...) asparagine glycosylation sites follow: Asn-10, Asn-24, Asn-29, and Asn-34. Residues 46–70 (ISVGLVLGAFILFAIVGNILVILSV) traverse the membrane as a helical segment. Topologically, residues 71 to 83 (ACNRHLRTPTNYF) are cytoplasmic. The chain crosses the membrane as a helical span at residues 84–105 (IVNLAMADLLLSFTVLPFSAAL). The Extracellular segment spans residues 106–115 (EVLGYWVLGR). The chain crosses the membrane as a helical span at residues 116 to 141 (IFCDIWAAVDVLCCTASILSLCAISI). A disulfide bridge links Cys-118 with Cys-195. Over 142-161 (DRYIGVRYSLQYPTLVTRRK) the chain is Cytoplasmic. Residues 162–184 (AILALLSVWVLSTVISIGPLLGW) traverse the membrane as a helical segment. Residues 185-201 (KEPAPNDDKECGVTEEP) are Extracellular-facing. The chain crosses the membrane as a helical span at residues 202–224 (FYALFSSLGSFYIPLAVILVMYC). Residues 225–295 (RVYIVAKRTT…FSREKKAAKT (71 aa)) lie on the Cytoplasmic side of the membrane. At Thr-264 the chain carries Phosphothreonine. Residues 296–319 (LGIVVGMFILCWLPFFIALPLGSL) form a helical membrane-spanning segment. At 320–326 (FSTLKPP) the chain is on the extracellular side. Residues 327-351 (DAVFKVVFWLGYFNSCLNPIIYPCS) form a helical membrane-spanning segment. At 352-520 (SKEFKRAFVR…SNMPLAPGQF (169 aa)) the chain is on the cytoplasmic side. The S-palmitoyl cysteine moiety is linked to residue Cys-365. The Nuclear localization signal motif lies at 368 to 380 (RGRGRRRRRRRRR). 2 disordered regions span residues 394-432 (GGSL…GYLG) and 479-520 (LTEP…PGQF).

The protein belongs to the G-protein coupled receptor 1 family. Adrenergic receptor subfamily. ADRA1B sub-subfamily. Homo- and heterooligomer. Heterooligomerizes with ADRA1B homooligomers in cardiac myocytes. Interacts with CAVIN4.

Its subcellular location is the nucleus membrane. The protein resides in the cell membrane. The protein localises to the cytoplasm. It is found in the membrane. It localises to the caveola. Its function is as follows. This alpha-adrenergic receptor mediates its action by association with G proteins that activate a phosphatidylinositol-calcium second messenger system. Its effect is mediated by G(q) and G(11) proteins. Nuclear ADRA1A-ADRA1B heterooligomers regulate phenylephrine (PE)-stimulated ERK signaling in cardiac myocytes. The chain is Alpha-1B adrenergic receptor (ADRA1B) from Homo sapiens (Human).